The primary structure comprises 277 residues: Large ribosomal subunit protein uL2 (277 aa).

The tract at residues 215–277 (GIRPTVRGSV…KLIVKRRNDK (63 aa)) is disordered. Basic and acidic residues predominate over residues 264 to 277 (KYSDKLIVKRRNDK).

The protein belongs to the universal ribosomal protein uL2 family. Part of the 50S ribosomal subunit. Forms a bridge to the 30S subunit in the 70S ribosome.

One of the primary rRNA binding proteins. Required for association of the 30S and 50S subunits to form the 70S ribosome, for tRNA binding and peptide bond formation. It has been suggested to have peptidyltransferase activity; this is somewhat controversial. Makes several contacts with the 16S rRNA in the 70S ribosome. The chain is Large ribosomal subunit protein uL2 from Clostridium acetobutylicum (strain ATCC 824 / DSM 792 / JCM 1419 / IAM 19013 / LMG 5710 / NBRC 13948 / NRRL B-527 / VKM B-1787 / 2291 / W).